Reading from the N-terminus, the 633-residue chain is Threonine--tRNA ligase (633 aa).

The region spanning 1 to 61 is the TGS domain; the sequence is MINIYFNNNL…TENCTFEVIT (61 aa). The tract at residues 242 to 533 is catalytic; that stretch reads DHRKIGKELE…LIEHHSGKFP (292 aa). Zn(2+) is bound by residues Cys333, His384, and His510.

Belongs to the class-II aminoacyl-tRNA synthetase family. In terms of assembly, homodimer. The cofactor is Zn(2+).

Its subcellular location is the cytoplasm. It catalyses the reaction tRNA(Thr) + L-threonine + ATP = L-threonyl-tRNA(Thr) + AMP + diphosphate + H(+). Catalyzes the attachment of threonine to tRNA(Thr) in a two-step reaction: L-threonine is first activated by ATP to form Thr-AMP and then transferred to the acceptor end of tRNA(Thr). Also edits incorrectly charged L-seryl-tRNA(Thr). The protein is Threonine--tRNA ligase of Ehrlichia canis (strain Jake).